The following is a 104-amino-acid chain: Large ribosomal subunit protein cL38 (104 aa).

A chloroplast-targeting transit peptide spans 1-39; it reads MASVSSIFGCGVSMAPNSSLRNKAIRTERRSACGGLLIE. Residues 42–76 form a disordered region; sequence SRPQKKSTAHHMKTRPRKSRLSDRNRKPTVYAPLP. Over residues 44-60 the composition is skewed to basic residues; that stretch reads PQKKSTAHHMKTRPRKS.

Belongs to the chloroplast-specific ribosomal protein cL38 family. In terms of assembly, part of the 50S ribosomal subunit.

Its subcellular location is the plastid. The protein resides in the chloroplast. The sequence is that of Large ribosomal subunit protein cL38 (PSRP6) from Pisum sativum (Garden pea).